The following is a 218-amino-acid chain: NAD(P)H-quinone oxidoreductase subunit I (218 aa).

2 consecutive 4Fe-4S ferredoxin-type domains span residues 55 to 84 (GRIHYEFDKCIACEVCVRVCPINLPVVDWV) and 95 to 124 (RNYSIDFGVCIFCGNCVEYCPTNCLSMTEE). [4Fe-4S] cluster-binding residues include Cys64, Cys67, Cys70, Cys74, Cys104, Cys107, Cys110, and Cys114. Positions 192–218 (LSLQQDSLQGDEGESLQDAPDQDQPKG) are disordered.

Belongs to the complex I 23 kDa subunit family. In terms of assembly, NDH-1 is composed of at least 11 different subunits. [4Fe-4S] cluster serves as cofactor.

The protein resides in the cellular thylakoid membrane. It catalyses the reaction a plastoquinone + NADH + (n+1) H(+)(in) = a plastoquinol + NAD(+) + n H(+)(out). The catalysed reaction is a plastoquinone + NADPH + (n+1) H(+)(in) = a plastoquinol + NADP(+) + n H(+)(out). In terms of biological role, NDH-1 shuttles electrons from an unknown electron donor, via FMN and iron-sulfur (Fe-S) centers, to quinones in the respiratory and/or the photosynthetic chain. The immediate electron acceptor for the enzyme in this species is believed to be plastoquinone. Couples the redox reaction to proton translocation, and thus conserves the redox energy in a proton gradient. This is NAD(P)H-quinone oxidoreductase subunit I from Prochlorococcus marinus (strain MIT 9303).